Reading from the N-terminus, the 341-residue chain is tRNA N6-adenosine threonylcarbamoyltransferase (341 aa).

Residues His111 and His115 each contribute to the Fe cation site. Residues 134–138 (LVSGG), Asp167, Gly180, and Asn276 each bind substrate. Asp304 is a binding site for Fe cation.

This sequence belongs to the KAE1 / TsaD family. Requires Fe(2+) as cofactor.

The protein resides in the cytoplasm. It carries out the reaction L-threonylcarbamoyladenylate + adenosine(37) in tRNA = N(6)-L-threonylcarbamoyladenosine(37) in tRNA + AMP + H(+). Required for the formation of a threonylcarbamoyl group on adenosine at position 37 (t(6)A37) in tRNAs that read codons beginning with adenine. Is involved in the transfer of the threonylcarbamoyl moiety of threonylcarbamoyl-AMP (TC-AMP) to the N6 group of A37, together with TsaE and TsaB. TsaD likely plays a direct catalytic role in this reaction. The sequence is that of tRNA N6-adenosine threonylcarbamoyltransferase from Pseudomonas fluorescens (strain SBW25).